A 393-amino-acid chain; its full sequence is NAD(P)H-quinone oxidoreductase subunit H, chloroplastic (393 aa).

It belongs to the complex I 49 kDa subunit family. As to quaternary structure, NDH is composed of at least 16 different subunits, 5 of which are encoded in the nucleus. Interacts with the chaperonin CNP60B4 subunit.

It is found in the plastid. Its subcellular location is the chloroplast thylakoid membrane. It carries out the reaction a plastoquinone + NADH + (n+1) H(+)(in) = a plastoquinol + NAD(+) + n H(+)(out). It catalyses the reaction a plastoquinone + NADPH + (n+1) H(+)(in) = a plastoquinol + NADP(+) + n H(+)(out). In terms of biological role, NDH shuttles electrons from NAD(P)H:plastoquinone, via FMN and iron-sulfur (Fe-S) centers, to quinones in the photosynthetic chain and possibly in a chloroplast respiratory chain. The immediate electron acceptor for the enzyme in this species is believed to be plastoquinone. Couples the redox reaction to proton translocation, and thus conserves the redox energy in a proton gradient. This Arabidopsis thaliana (Mouse-ear cress) protein is NAD(P)H-quinone oxidoreductase subunit H, chloroplastic.